The chain runs to 86 residues: Large ribosomal subunit protein bL27 (86 aa).

Positions 1 to 10 are enriched in gly residues; it reads MAQKKGGGST. The segment at 1 to 21 is disordered; that stretch reads MAQKKGGGSTRNGRDSESKRL.

Belongs to the bacterial ribosomal protein bL27 family.

The protein is Large ribosomal subunit protein bL27 of Cupriavidus necator (strain ATCC 17699 / DSM 428 / KCTC 22496 / NCIMB 10442 / H16 / Stanier 337) (Ralstonia eutropha).